We begin with the raw amino-acid sequence, 225 residues long: Sirohydrochlorin ferrochelatase, chloroplastic (225 aa).

Residues 1 to 46 (MTTQSQFLVNLSYGGLASQSNLRANNRVSPSSCQITRTNRSWALPV) constitute a chloroplast transit peptide. Residues His89 and His155 each coordinate Fe cation. 4 residues coordinate [4Fe-4S] cluster: Cys199, Cys210, Cys213, and Cys219.

Belongs to the CbiX family. SirB subfamily. Homodimer. The cofactor is [4Fe-4S] cluster.

The protein localises to the plastid. It localises to the chloroplast. It catalyses the reaction siroheme + 2 H(+) = sirohydrochlorin + Fe(2+). It functions in the pathway porphyrin-containing compound metabolism; siroheme biosynthesis; siroheme from sirohydrochlorin: step 1/1. In terms of biological role, chelates iron to the siroheme precursor. Catalyzes the last step of the siroheme biosynthesis. Unlike its counterparts in bacteria, contains an [Fe-S] cluster which is not involved directly in the enzymatic reaction, but may play regulatory role in iron, sulfur and tetrapyrrole metabolism. The [Fe-S] cluster is required for normal plant growth. This Arabidopsis thaliana (Mouse-ear cress) protein is Sirohydrochlorin ferrochelatase, chloroplastic.